The following is a 434-amino-acid chain: ATP-dependent protease ATPase subunit HslU (434 aa).

ATP-binding positions include V18, G60–E65, D247, E312, and R384.

The protein belongs to the ClpX chaperone family. HslU subfamily. A double ring-shaped homohexamer of HslV is capped on each side by a ring-shaped HslU homohexamer. The assembly of the HslU/HslV complex is dependent on binding of ATP.

Its subcellular location is the cytoplasm. Its function is as follows. ATPase subunit of a proteasome-like degradation complex; this subunit has chaperone activity. The binding of ATP and its subsequent hydrolysis by HslU are essential for unfolding of protein substrates subsequently hydrolyzed by HslV. HslU recognizes the N-terminal part of its protein substrates and unfolds these before they are guided to HslV for hydrolysis. This Hyphomonas neptunium (strain ATCC 15444) protein is ATP-dependent protease ATPase subunit HslU.